The chain runs to 1100 residues: SLIT-ROBO Rho GTPase-activating protein 2 (1100 aa).

Positions T19–D324 constitute an F-BAR domain. Coiled coils occupy residues Y170 to K201 and G363 to M400. The segment covering L181 to T203 has biased composition (basic and acidic residues). The tract at residues L181 to L210 is disordered. A Rho-GAP domain is found at V496–F680. The region spanning S738–M797 is the SH3 domain. 2 disordered regions span residues G800–H835 and E852–P938. Residues P807–S823 show a composition bias toward basic and acidic residues. The segment covering R919–N932 has biased composition (polar residues). The stretch at E945 to K972 forms a coiled coil. Residues K986–V1100 form a disordered region. Polar residues-rich tracts occupy residues S987 to L997 and S1008 to F1049. A compositionally biased stretch (low complexity) spans S1067 to T1081. The segment covering T1082–T1094 has biased composition (pro residues).

Its subcellular location is the cell membrane. The protein localises to the cell projection. It localises to the dendritic spine. It is found in the postsynaptic density. The protein resides in the postsynaptic cell membrane. Its subcellular location is the lamellipodium. The protein localises to the cytoplasmic vesicle. It localises to the phagosome. It is found in the nucleus. The protein resides in the cytoplasm. Its subcellular location is the cytosol. Functionally, postsynaptic RAC1 GTPase activating protein (GAP) that plays a key role in neuronal morphogenesis and migration mainly during development of the cerebral cortex. Regulates excitatory and inhibitory synapse maturation and density in cortical pyramidal neurons. Mechanistically, acts by binding and deforming membranes, thereby regulating actin dynamics to regulate cell migration and differentiation. The sequence is that of SLIT-ROBO Rho GTPase-activating protein 2 (srgap2) from Danio rerio (Zebrafish).